We begin with the raw amino-acid sequence, 369 residues long: Peptide chain release factor 1 (369 aa).

Glutamine 238 is modified (N5-methylglutamine).

Belongs to the prokaryotic/mitochondrial release factor family. In terms of processing, methylated by PrmC. Methylation increases the termination efficiency of RF1.

It localises to the cytoplasm. Functionally, peptide chain release factor 1 directs the termination of translation in response to the peptide chain termination codons UAG and UAA. This is Peptide chain release factor 1 from Parabacteroides distasonis (strain ATCC 8503 / DSM 20701 / CIP 104284 / JCM 5825 / NCTC 11152).